We begin with the raw amino-acid sequence, 790 residues long: MKAFGPPHEGPLQGLVASRIETYGGRHRASAQSTAGRLYPRGYPVLDPSRRRLQQYVPFARGSGQARGLSPMRLRDPEPEKRHGGHVGAGLLHSPKLKELTKAHELEVRLHTFSMFGMPRLPPEDRRHWEIGEGGDSGLTIEKSWRELVPGHKEMSQELCHQQEALWELLTTELIYVRKLKIMTDLLAAGLLNLQRVGLLMEVSAETLFGNVPSLIRTHRSFWDEVLGPTLEETRASGQPLDPIGLQSGFLTFGQRFHPYVQYCLRVKQTMAYAREQQETNPLFHAFVQWCEKHKRSGRQMLCDLLIKPHQRITKYPLLLHAVLKRSPEARAQEALNAMIEAVESFLRHINGQVRQGEEQESLAAAAQRIGPYEVLEPPSDEVEKNLRPFSTLDLTSPMLGVASEHTRQLLLEGPVRVKEGREGKLDVYLFLFSDVLLVTKPQRKADKAKVIRPPLMLEKLVCQPLRDPNSFLLIHLTEFQCVSSALLVHCPSPTDRAQWLEKTQQAQAALQKLKAEEYVQQKRELLTLYRDQDRESPSTRPSTPSLEGSQSSAEGRTPEFSTIIPHLVVTEDTDEDAPLVPDDTSDSGYGTLIPGTPTGSRSPLSRLRQRALRRDPRLTFSTLELRDIPLRPHPPDPQAPQRRSAPELPEGILKGGSLPQEDPPTWSEEEDGASERGNVVVETLHRARLRGQLPSSPTHADSAGESPWESSGEEEEEGPLFLKAGHTSLRPMRAEDMLREIREELASQRIEGAEEPRDSRPRKLTRAQLQRMRGPHIIQLDTPLSASEV.

Positions 63-91 (SGQARGLSPMRLRDPEPEKRHGGHVGAGL) are disordered. Over residues 73–82 (RLRDPEPEKR) the composition is skewed to basic and acidic residues. The region spanning 161-353 (HQQEALWELL…ESFLRHINGQ (193 aa)) is the DH domain. The PH domain occupies 409-509 (QLLLEGPVRV…WLEKTQQAQA (101 aa)). Basic and acidic residues-rich tracts occupy residues 529–538 (LYRDQDRESP) and 625–635 (ELRDIPLRPHP). 3 disordered regions span residues 529–677 (LYRD…ASER), 690–730 (LRGQ…HTSL), and 748–790 (SQRI…ASEV). Over residues 748–762 (SQRIEGAEEPRDSRP) the composition is skewed to basic and acidic residues.

In terms of assembly, interacts with MYH10. Interacts with ELMO1 and EZR (in an open conformation). Interacts with CSPP1. Highest expression in the placenta. Low levels in small intestine, lung, liver, kidney, thymus and heart.

Its subcellular location is the cell projection. It localises to the microvillus. The protein localises to the cytoplasm. The protein resides in the cytoskeleton. It is found in the spindle. Its subcellular location is the spindle pole. It localises to the cleavage furrow. Its function is as follows. Guanine nucleotide exchange factor activating the small GTPase RHOA, which, in turn, induces myosin filament formation. Also activates RHOG. Does not activate RAC1, or to a much lower extent than RHOA and RHOG. Part of a functional unit, involving PLEKHG6, MYH10 and RHOA, at the cleavage furrow to advance furrow ingression during cytokinesis. In epithelial cells, required for the formation of microvilli and membrane ruffles on the apical pole. Along with EZR, required for normal macropinocytosis. The protein is Pleckstrin homology domain-containing family G member 6 (PLEKHG6) of Homo sapiens (Human).